The primary structure comprises 179 residues: MIKSLLEGTWSQLRTLGMVFMHAFRKRETLQYPEEPVYLSPRYRGRIVLTRDPDGEERCVACNLCAVACPVACISLQKGERDDGRWYPEFFRINFSRCIFCGLCEEACPTSAIQLTPDFEMSEYRRQELVYEKDDLLISGPGKDHNYNFYRVAGLSIAGKGKGEAQNEAEPIDVKSLMP.

4Fe-4S ferredoxin-type domains follow at residues 49-79 and 89-118; these read LTRD…LQKG and EFFR…LTPD. [4Fe-4S] cluster-binding residues include cysteine 59, cysteine 62, cysteine 65, cysteine 69, cysteine 98, cysteine 101, cysteine 104, and cysteine 108.

This sequence belongs to the complex I 23 kDa subunit family. NDH-1 is composed of 14 different subunits. Subunits NuoA, H, J, K, L, M, N constitute the membrane sector of the complex. [4Fe-4S] cluster is required as a cofactor.

The protein localises to the cell inner membrane. It carries out the reaction a quinone + NADH + 5 H(+)(in) = a quinol + NAD(+) + 4 H(+)(out). Functionally, NDH-1 shuttles electrons from NADH, via FMN and iron-sulfur (Fe-S) centers, to quinones in the respiratory chain. The immediate electron acceptor for the enzyme in this species is believed to be ubiquinone. Couples the redox reaction to proton translocation (for every two electrons transferred, four hydrogen ions are translocated across the cytoplasmic membrane), and thus conserves the redox energy in a proton gradient. The protein is NADH-quinone oxidoreductase subunit I of Chromohalobacter salexigens (strain ATCC BAA-138 / DSM 3043 / CIP 106854 / NCIMB 13768 / 1H11).